The chain runs to 379 residues: MSDFLPFSRPSMGDAELAALREVLASGWITTGPKNQALEAAFCQLTGNRHAIAVSSATGGMHVTLMALGIGPGDEVITPSQTWVSTLNMICLLGATPVMIDVDNDNLMITPDAVEAAITSRTKAIIPVHYAGAPADIDAIRAVGERHGISVIEDAAHAAGTHYKGRHVGWQGTAIFSFHAIKNMTCAEGGLIVTDDDELASRIRSLKFHGLGVDAYDRQTHGRAPQAEVITPGFKYNLADINAALALVQLEKLSHANQRRTEIAQRYLRELADTPFKPLSVPTWDHQHAWHLFIIRVDEAACGISRDALMEKLKAMGIGTGLHFRAAHTQKYYRERFPEVSLPNTEWNSARICSLPLFPDMTDDDVTRVISALRQLSGR.

Lysine 182 is modified (N6-(pyridoxal phosphate)lysine).

This sequence belongs to the DegT/DnrJ/EryC1 family. ArnB subfamily. As to quaternary structure, homodimer. The cofactor is pyridoxal 5'-phosphate.

It carries out the reaction UDP-4-amino-4-deoxy-beta-L-arabinose + 2-oxoglutarate = UDP-beta-L-threo-pentopyranos-4-ulose + L-glutamate. Its pathway is nucleotide-sugar biosynthesis; UDP-4-deoxy-4-formamido-beta-L-arabinose biosynthesis; UDP-4-deoxy-4-formamido-beta-L-arabinose from UDP-alpha-D-glucuronate: step 2/3. It functions in the pathway bacterial outer membrane biogenesis; lipopolysaccharide biosynthesis. Catalyzes the conversion of UDP-4-keto-arabinose (UDP-Ara4O) to UDP-4-amino-4-deoxy-L-arabinose (UDP-L-Ara4N). The modified arabinose is attached to lipid A and is required for resistance to polymyxin and cationic antimicrobial peptides. The polypeptide is UDP-4-amino-4-deoxy-L-arabinose--oxoglutarate aminotransferase (Klebsiella pneumoniae subsp. pneumoniae (strain ATCC 700721 / MGH 78578)).